The primary structure comprises 73 residues: MSKKDVIELEGTIVEALPNAMFKVELENGHTILGHISGKMRMNYIKILPGDGVTVQISPYDLSRGRIVYRKKN.

The 72-residue stretch at 1–72 folds into the S1-like domain; the sequence is MSKKDVIELE…SRGRIVYRKK (72 aa).

It belongs to the IF-1 family. As to quaternary structure, component of the 30S ribosomal translation pre-initiation complex which assembles on the 30S ribosome in the order IF-2 and IF-3, IF-1 and N-formylmethionyl-tRNA(fMet); mRNA recruitment can occur at any time during PIC assembly.

Its subcellular location is the cytoplasm. In terms of biological role, one of the essential components for the initiation of protein synthesis. Stabilizes the binding of IF-2 and IF-3 on the 30S subunit to which N-formylmethionyl-tRNA(fMet) subsequently binds. Helps modulate mRNA selection, yielding the 30S pre-initiation complex (PIC). Upon addition of the 50S ribosomal subunit IF-1, IF-2 and IF-3 are released leaving the mature 70S translation initiation complex. In Fusobacterium nucleatum subsp. nucleatum (strain ATCC 25586 / DSM 15643 / BCRC 10681 / CIP 101130 / JCM 8532 / KCTC 2640 / LMG 13131 / VPI 4355), this protein is Translation initiation factor IF-1.